Reading from the N-terminus, the 511-residue chain is Coiled-coil domain-containing protein 125 (511 aa).

The span at 1–12 shows a compositional bias: polar residues; that stretch reads MSKVARSSSESD. The tract at residues 1-110 is disordered; sequence MSKVARSSSE…TVDSNSELSN (110 aa). Residues 43 to 54 show a composition bias toward basic and acidic residues; sequence EFSHRSRKRSDG. Polar residues predominate over residues 83–108; the sequence is QDTFPQVSRISNYRRQSSTVDSNSEL. Coiled-coil stretches lie at residues 105–243 and 293–325; these read NSEL…LEAL and RMAA…MADA. Phosphoserine is present on serine 504.

The protein resides in the cytoplasm. May be involved in the regulation of cell migration. The protein is Coiled-coil domain-containing protein 125 (CCDC125) of Homo sapiens (Human).